The primary structure comprises 331 residues: 4-hydroxythreonine-4-phosphate dehydrogenase (331 aa).

Substrate-binding residues include His-137 and Thr-138. The a divalent metal cation site is built by His-167, His-212, and His-267. Substrate is bound by residues Lys-275, Asn-284, and Arg-293.

Belongs to the PdxA family. As to quaternary structure, homodimer. The cofactor is Zn(2+). Mg(2+) serves as cofactor. Co(2+) is required as a cofactor.

The protein localises to the cytoplasm. The enzyme catalyses 4-(phosphooxy)-L-threonine + NAD(+) = 3-amino-2-oxopropyl phosphate + CO2 + NADH. Its pathway is cofactor biosynthesis; pyridoxine 5'-phosphate biosynthesis; pyridoxine 5'-phosphate from D-erythrose 4-phosphate: step 4/5. Its function is as follows. Catalyzes the NAD(P)-dependent oxidation of 4-(phosphooxy)-L-threonine (HTP) into 2-amino-3-oxo-4-(phosphooxy)butyric acid which spontaneously decarboxylates to form 3-amino-2-oxopropyl phosphate (AHAP). The polypeptide is 4-hydroxythreonine-4-phosphate dehydrogenase (Yersinia pestis bv. Antiqua (strain Angola)).